The chain runs to 456 residues: Bifunctional protein GlmU (456 aa).

The tract at residues 1 to 231 (MERTCLAIIL…EEELTGCNTR (231 aa)) is pyrophosphorylase. UDP-N-acetyl-alpha-D-glucosamine contacts are provided by residues 10-13 (LAAG), Lys-24, Gln-77, and 82-83 (GT). Residue Asp-107 coordinates Mg(2+). 4 residues coordinate UDP-N-acetyl-alpha-D-glucosamine: Gly-143, Glu-157, Asn-172, and Asn-229. Asn-229 contributes to the Mg(2+) binding site. Residues 232-252 (AELAYIERLWQQRRRQELMLA) are linker. Residues 253–456 (GVSMVAPETV…AARKKVKAAE (204 aa)) form an N-acetyltransferase region. Residues Arg-318 and Lys-336 each contribute to the UDP-N-acetyl-alpha-D-glucosamine site. The Proton acceptor role is filled by His-348. UDP-N-acetyl-alpha-D-glucosamine-binding residues include Tyr-351 and Asn-362. Acetyl-CoA contacts are provided by residues Ala-365, 371 to 372 (NY), Ser-390, Ser-408, and Arg-425.

The protein in the N-terminal section; belongs to the N-acetylglucosamine-1-phosphate uridyltransferase family. This sequence in the C-terminal section; belongs to the transferase hexapeptide repeat family. In terms of assembly, homotrimer. Requires Mg(2+) as cofactor.

It is found in the cytoplasm. It carries out the reaction alpha-D-glucosamine 1-phosphate + acetyl-CoA = N-acetyl-alpha-D-glucosamine 1-phosphate + CoA + H(+). The catalysed reaction is N-acetyl-alpha-D-glucosamine 1-phosphate + UTP + H(+) = UDP-N-acetyl-alpha-D-glucosamine + diphosphate. Its pathway is nucleotide-sugar biosynthesis; UDP-N-acetyl-alpha-D-glucosamine biosynthesis; N-acetyl-alpha-D-glucosamine 1-phosphate from alpha-D-glucosamine 6-phosphate (route II): step 2/2. It functions in the pathway nucleotide-sugar biosynthesis; UDP-N-acetyl-alpha-D-glucosamine biosynthesis; UDP-N-acetyl-alpha-D-glucosamine from N-acetyl-alpha-D-glucosamine 1-phosphate: step 1/1. The protein operates within bacterial outer membrane biogenesis; LPS lipid A biosynthesis. In terms of biological role, catalyzes the last two sequential reactions in the de novo biosynthetic pathway for UDP-N-acetylglucosamine (UDP-GlcNAc). The C-terminal domain catalyzes the transfer of acetyl group from acetyl coenzyme A to glucosamine-1-phosphate (GlcN-1-P) to produce N-acetylglucosamine-1-phosphate (GlcNAc-1-P), which is converted into UDP-GlcNAc by the transfer of uridine 5-monophosphate (from uridine 5-triphosphate), a reaction catalyzed by the N-terminal domain. This is Bifunctional protein GlmU from Sinorhizobium fredii (strain NBRC 101917 / NGR234).